A 341-amino-acid polypeptide reads, in one-letter code: Processive diacylglycerol beta-glycosyltransferase (341 aa).

This sequence belongs to the glycosyltransferase 2 family. The cofactor is Mg(2+).

It localises to the cell membrane. The enzyme catalyses a 1,2-diacyl-sn-glycerol + UDP-alpha-D-glucose = a 1,2-diacyl-3-O-(beta-D-glucopyranosyl)-sn-glycerol + UDP + H(+). It carries out the reaction a 1,2-diacyl-sn-glycerol + UDP-alpha-D-galactose = a 1,2-diacyl-3-O-(beta-D-galactosyl)-sn-glycerol + UDP + H(+). It catalyses the reaction a 1,2-diacyl-3-O-(beta-D-glucopyranosyl)-sn-glycerol + UDP-alpha-D-glucose = a 1,2-diacyl-3-O-(beta-D-Glc-(1-&gt;6)-beta-D-Glc)-sn-glycerol + UDP + H(+). The catalysed reaction is a 1,2-diacyl-3-O-(beta-D-galactosyl)-sn-glycerol + UDP-alpha-D-galactose = a 1,2-diacyl-3-O-[beta-D-galactosyl-(1-&gt;6)-beta-D-galactosyl]-sn-glycerol + UDP + H(+). It functions in the pathway glycolipid metabolism; diglucosyl-diacylglycerol biosynthesis. Activated by the negatively charged lipid dioleoylphosphatidylglycerol (DOPG) and inhibited by N-(n-nonyl)deoxygalactonojirimycin (C9J). Its function is as follows. Processive glycosyltransferase involved in the biosynthesis of both the non-bilayer-prone beta-monoglycosyldiacylglycerol and the bilayer-forming membrane lipid beta-diglycosyldiacylglycerol. These components contribute to regulate the properties and stability of the membrane. Catalyzes sequentially the transfers of glucosyl or galactosyl residues from UDP-Glc or UDP-Gal to diacylglycerol (DAG) acceptor to form the corresponding beta-glycosyl-DAG (3-O-(beta-D-glycopyranosyl)-1,2-diacyl-sn-glycerol), which then acts as acceptor to give beta-diglycosyl-DAG product (3-O-(beta-D-glycopyranosyl-beta-(1-&gt;6)-D-glycopyranosyl)-1,2-diacyl-sn-glycerol). Dioleoylglycerol (DOG) is a preferred sugar acceptor than 3-O-(beta-D-glucopyranosyl)-1,2-dioleoyl-sn-glycerol. The chain is Processive diacylglycerol beta-glycosyltransferase from Mycoplasma genitalium (strain ATCC 33530 / DSM 19775 / NCTC 10195 / G37) (Mycoplasmoides genitalium).